Consider the following 478-residue polypeptide: Serralysin C (478 aa).

The propeptide occupies 1–17; sequence MEKNLSSRDDDALHSLS. Histidine 187 lines the Zn(2+) pocket. Residue glutamate 188 is part of the active site. Zn(2+)-binding residues include histidine 191 and tyrosine 227. 30 residues coordinate Ca(2+): arginine 264, glycine 266, aspartate 296, glycine 298, glycine 299, aspartate 301, threonine 338, glutamate 340, glycine 345, glycine 347, aspartate 349, asparagine 354, alanine 356, asparagine 358, glycine 362, glycine 363, alanine 364, glycine 365, aspartate 367, glycine 371, glycine 372, glycine 374, aspartate 376, glycine 380, glycine 381, glycine 383, aspartate 385, aspartate 394, aspartate 401, and aspartate 411. Hemolysin-type calcium-binding repeat units follow at residues 343–360 and 361–378; these read IGGSGNDLLIGNNADNTL and RGGAGDDVLFGGSGADRL.

Belongs to the peptidase M10B family. The cofactor is Ca(2+). It depends on Zn(2+) as a cofactor.

Its subcellular location is the secreted. The catalysed reaction is Preferential cleavage of bonds with hydrophobic residues in P1'.. The protein is Serralysin C (prtC) of Dickeya chrysanthemi (Pectobacterium chrysanthemi).